A 188-amino-acid polypeptide reads, in one-letter code: CASP-like protein 4B1 (188 aa).

The disordered stretch occupies residues 1–34 (MTNPDNMKPVEATDVESAAEKTSEPTPASGTSTI). Residues 1-46 (MTNPDNMKPVEATDVESAAEKTSEPTPASGTSTITQRWKREDLIKK) are Cytoplasmic-facing. Residues 24-34 (EPTPASGTSTI) are compositionally biased toward polar residues. A helical transmembrane segment spans residues 47–67 (ASPITRGICLLFSLIAFLIMV). The Extracellular portion of the chain corresponds to 68–84 (SNKHGYGRNFNDYEEYR). The helical transmembrane segment at 85-105 (YVLAISIISTLYTAWQTFAHF) threads the bilayer. The Cytoplasmic segment spans residues 106 to 124 (SKREIFDRRTSILVDFSGD). Residues 125-145 (QIVAYLLISAASSAIPLTNIF) traverse the membrane as a helical segment. Over 146-156 (REGQDNIFTDS) the chain is Extracellular. A helical transmembrane segment spans residues 157 to 177 (AASAISMAIFAFIALALSALF). Residues 178-188 (SGYKLSTHSFI) lie on the Cytoplasmic side of the membrane.

This sequence belongs to the Casparian strip membrane proteins (CASP) family. Homodimer and heterodimers.

It is found in the cell membrane. The chain is CASP-like protein 4B1 from Arabidopsis thaliana (Mouse-ear cress).